Consider the following 95-residue polypeptide: Aspartyl/glutamyl-tRNA(Asn/Gln) amidotransferase subunit C (95 aa).

Belongs to the GatC family. Heterotrimer of A, B and C subunits.

It catalyses the reaction L-glutamyl-tRNA(Gln) + L-glutamine + ATP + H2O = L-glutaminyl-tRNA(Gln) + L-glutamate + ADP + phosphate + H(+). The enzyme catalyses L-aspartyl-tRNA(Asn) + L-glutamine + ATP + H2O = L-asparaginyl-tRNA(Asn) + L-glutamate + ADP + phosphate + 2 H(+). Functionally, allows the formation of correctly charged Asn-tRNA(Asn) or Gln-tRNA(Gln) through the transamidation of misacylated Asp-tRNA(Asn) or Glu-tRNA(Gln) in organisms which lack either or both of asparaginyl-tRNA or glutaminyl-tRNA synthetases. The reaction takes place in the presence of glutamine and ATP through an activated phospho-Asp-tRNA(Asn) or phospho-Glu-tRNA(Gln). The polypeptide is Aspartyl/glutamyl-tRNA(Asn/Gln) amidotransferase subunit C (Alkalilimnicola ehrlichii (strain ATCC BAA-1101 / DSM 17681 / MLHE-1)).